Reading from the N-terminus, the 292-residue chain is tRNA(Ile)-lysidine synthase (292 aa).

Residue 32 to 37 coordinates ATP; the sequence is SGGADS.

This sequence belongs to the tRNA(Ile)-lysidine synthase family.

It is found in the cytoplasm. It catalyses the reaction cytidine(34) in tRNA(Ile2) + L-lysine + ATP = lysidine(34) in tRNA(Ile2) + AMP + diphosphate + H(+). Functionally, ligates lysine onto the cytidine present at position 34 of the AUA codon-specific tRNA(Ile) that contains the anticodon CAU, in an ATP-dependent manner. Cytidine is converted to lysidine, thus changing the amino acid specificity of the tRNA from methionine to isoleucine. The protein is tRNA(Ile)-lysidine synthase of Corynebacterium diphtheriae (strain ATCC 700971 / NCTC 13129 / Biotype gravis).